The primary structure comprises 495 residues: Averantin hydroxylase (495 aa).

The helical transmembrane segment at 12–32 (ILLLIVLTVLTPPSLALYRLW) threads the bilayer. Residues asparagine 258 and asparagine 289 are each glycosylated (N-linked (GlcNAc...) asparagine). Residue cysteine 436 coordinates heme.

This sequence belongs to the cytochrome P450 family. It depends on heme as a cofactor.

It is found in the membrane. It catalyses the reaction (1'S)-averantin + reduced [NADPH--hemoprotein reductase] + O2 = (1'S,5'R)-5'-hydroxyaverantin + oxidized [NADPH--hemoprotein reductase] + H2O. It carries out the reaction (1'S)-averantin + reduced [NADPH--hemoprotein reductase] + O2 = (1'S,5'S)-5'-hydroxyaverantin + oxidized [NADPH--hemoprotein reductase] + H2O + H(+). Its pathway is mycotoxin biosynthesis; aflatoxin biosynthesis. In terms of biological role, averantin hydroxylase; part of the gene cluster that mediates the biosynthesis of aflatoxins, a group of polyketide-derived furanocoumarins, and part of the most toxic and carcinogenic compounds among the known mycotoxins. The four major aflatoxins produced by A.parasiticus are aflatoxin B1 (AFB1), aflatoxin B2 (AFB2), aflatoxin G1 (AFG1) and aflatoxin G2 (AFG2). Within the aflatoxin pathway, the cytochrome P450 monooxygenase aflG catalyzes the hydroxylation of AVN to 5'hydroxyaverantin (HAVN). The biosynthesis of aflatoxins begins with the norsolorinic acid synthase aflC that combines a hexanoyl starter unit produced by the fatty acid synthase aflA/aflB and 7 malonyl-CoA extender units to synthesize the precursor NOR. The second step is the conversion of NOR to averantin and requires the norsolorinic acid ketoreductase aflD, which catalyzes the dehydration of norsolorinic acid to form (1'S)-averantin. The norsolorinic acid reductases aflE and aflF may also play a role in the conversion of NOR to AVN. The cytochrome P450 monooxygenase aflG then catalyzes the hydroxylation of AVN to 5'hydroxyaverantin (HAVN). The next step is performed by the 5'-hydroxyaverantin dehydrogenase aflH that transforms HAVN to 5'-oxoaverantin (OAVN) which is further converted to averufin (AVF) by aflK that plays a dual role in the pathway, as a 5'-oxoaverantin cyclase that mediates conversion of 5'-oxoaverantin, as well as a versicolorin B synthase in a later step in the pathway. The averufin oxidase aflI catalyzes the conversion of AVF to versiconal hemiacetal acetate (VHA). VHA is then the substrate for the versiconal hemiacetal acetate esterase aflJ to yield versiconal (VAL). Versicolorin B synthase aflK then converts VAL to versicolorin B (VERB) by closing the bisfuran ring of aflatoxin which is required for DNA-binding, thus giving to aflatoxin its activity as a mutagen. Then, the activity of the versicolorin B desaturase aflL leads to versicolorin A (VERA). A branch point starts from VERB since it can also be converted to dihydrodemethylsterigmatocystin (DMDHST), probably also by aflL, VERA being a precursor for aflatoxins B1 and G1, and DMDHST for aflatoxins B2 and G2. Next, the versicolorin reductase aflM and the cytochrome P450 monooxygenase aflN are involved in conversion of VERA to demethylsterigmatocystin (DMST). AflX and aflY seem also involved in this step, through probable aflX-mediated epoxide ring-opening step following versicolorin A oxidation and aflY-mediated Baeyer-Villiger oxidation required for the formation of the xanthone ring. The methyltransferase aflO then leads to the modification of DMST to sterigmatocystin (ST), and of DMDHST to dihydrosterigmatocystin (DHST). Both ST and DHST are then substrates of the O-methyltransferase aflP to yield O-methylsterigmatocystin (OMST) and dihydro-O-methylsterigmatocystin (DHOMST), respectively. Finally OMST is converted to aflatoxins B1 and G1, and DHOMST to aflatoxins B2 and G2, via the action of several enzymes including O-methylsterigmatocystin oxidoreductase aflQ, the cytochrome P450 monooxygenase aflU, but also the NADH-dependent flavin oxidoreductase nadA which is specifically required for the synthesis of AFG1. The polypeptide is Averantin hydroxylase (Aspergillus parasiticus (strain ATCC 56775 / NRRL 5862 / SRRC 143 / SU-1)).